Reading from the N-terminus, the 398-residue chain is Stearoyl-[acyl-carrier-protein] 9-desaturase, chloroplastic (398 aa).

Residues 1 to 34 (MALKLNPLASQPYNFPSSARPPISTFRSPKFLCL) constitute a chloroplast transit peptide. Positions 140, 178, 181, 231, 264, and 267 each coordinate Fe cation.

It belongs to the fatty acid desaturase type 2 family. In terms of assembly, homodimer. Requires Fe(2+) as cofactor.

The protein resides in the plastid. It is found in the chloroplast. The enzyme catalyses octadecanoyl-[ACP] + 2 reduced [2Fe-2S]-[ferredoxin] + O2 + 2 H(+) = (9Z)-octadecenoyl-[ACP] + 2 oxidized [2Fe-2S]-[ferredoxin] + 2 H2O. It functions in the pathway lipid metabolism; fatty acid metabolism. Converts stearoyl-ACP to oleoyl-ACP by introduction of a cis double bond between carbons 9 and 10 of the acyl chain. In Brassica napus (Rape), this protein is Stearoyl-[acyl-carrier-protein] 9-desaturase, chloroplastic.